Here is a 481-residue protein sequence, read N- to C-terminus: RAC-beta serine/threonine-protein kinase (481 aa).

M1 bears the N-acetylmethionine mark. Residues 5–108 (SVIKEGWLHK…WMRAIQMVAN (104 aa)) form the PH domain. The residue at position 34 (S34) is a Phosphoserine. C60 and C77 are joined by a disulfide. A Phosphoserine modification is found at S126. O-linked (GlcNAc) serine glycosylation is found at S128 and S131. The 258-residue stretch at 152–409 (FDYLKLLGKG…AKEVMEHRFF (258 aa)) folds into the Protein kinase domain. Residues 158–166 (LGKGTFGKV) and K181 each bind ATP. D275 (proton acceptor) is an active-site residue. Residues N280 and D293 each coordinate Mn(2+). C297 and C311 are oxidised to a cystine. T306 is a glycosylation site (O-linked (GlcNAc) threonine). The residue at position 309 (T309) is a Phosphothreonine; by PDPK1. O-linked (GlcNAc) threonine glycosylation is present at T313. Residues 410–481 (LSINWQDVVQ…QFSYSASIRE (72 aa)) form the AGC-kinase C-terminal domain. S447 carries the post-translational modification Phosphoserine. T451 carries the phosphothreonine modification. Phosphoserine occurs at positions 474 and 478. S474 is a glycosylation site (O-linked (GlcNAc) serine; alternate).

It belongs to the protein kinase superfamily. AGC Ser/Thr protein kinase family. RAC subfamily. Interacts with BTBD10. Interacts with KCTD20. Interacts (via PH domain) with MTCP1, TCL1A and TCL1B; this interaction may facilitate AKT2 oligomerization and phosphorylation, hence increasing kinase activity. Interacts with PHB2; this interaction may be important for myogenic differentiation. Interacts (when phosphorylated) with CLIP3/ClipR-59; this interaction promotes AKT2 recruitment to the plasma membrane. Interacts with WDFY2/ProF (via WD repeats 1-3). Post-translationally, phosphorylation on Thr-309 and Ser-474 is required for full activity. Phosphorylation of the activation loop at Thr-309 by PDPK1/PDK1 is a prerequisite for full activation. Phosphorylated and activated by PDPK1/PDK1 in the presence of phosphatidylinositol 3,4,5-trisphosphate. Phosphorylation by mTORC2 in response to growth factors plays a key role in AKT1 activation: mTORC2 phosphorylates different sites depending on the context, such as Ser-474 or Ser-478, thereby facilitating subsequent phosphorylation of the activation loop by PDPK1/PDK1. In terms of processing, ubiquitinated; undergoes both 'Lys-48'- and 'Lys-63'-linked polyubiquitination. TRAF6 catalyzes 'Lys-63'-linked AKT2 ubiquitination; this modification may be important for AKT2 recruitment to the plasma membrane and for AKT2 activating phosphorylation. When phosphorylated, undergoes 'Lys-48'-polyubiquitination catalyzed by TTC3 in the nucleus, leading to its degradation by the proteasome. O-GlcNAcylation at Thr-306 and Thr-313 inhibits activating phosphorylation at Thr-309 via the disruption of the interaction between AKT and PDPK1/PDK1. As to expression, widely expressed. Expressed in myoblasts.

Its subcellular location is the cytoplasm. The protein resides in the nucleus. The protein localises to the cell membrane. It localises to the early endosome. It carries out the reaction L-seryl-[protein] + ATP = O-phospho-L-seryl-[protein] + ADP + H(+). The catalysed reaction is L-threonyl-[protein] + ATP = O-phospho-L-threonyl-[protein] + ADP + H(+). With respect to regulation, phosphorylation at Thr-309 (in the kinase domain) and Ser-474 (in the C-terminal regulatory region) is required for full activation. In adipocytes and hepatocytes, the activation is induced by insulin. Aminofurazans, such as 4-[2-(4-amino-2,5-dihydro-1,2,5-oxadiazol-3-yl)-6-{[(1S)-3-amino-1-phenylpropyl]oxy}-1-ethyl-1H-imidazo[4,5-c]pyridin-4-yl]-2-methylbut-3-yn-2-ol (compound 32), are potent AKT2 inhibitors. AKT2 phosphorylation of PKP1 is induced by insulin. Serine/threonine kinase closely related to AKT1 and AKT3. All 3 enzymes, AKT1, AKT2 and AKT3, are collectively known as AKT kinase. AKT regulates many processes including metabolism, proliferation, cell survival, growth and angiogenesis, through the phosphorylation of a range of downstream substrates. Over 100 substrates have been reported so far, although for most of them, the precise AKT kinase catalyzing the reaction was not specified. AKT regulates glucose uptake by mediating insulin-induced translocation of the SLC2A4/GLUT4 glucose transporter to the cell surface. Phosphorylation of PTPN1 at 'Ser-50' negatively modulates its phosphatase activity preventing dephosphorylation of the insulin receptor and the attenuation of insulin signaling. Phosphorylation of TBC1D4 triggers the binding of this effector to inhibitory 14-3-3 proteins, which is required for insulin-stimulated glucose transport. AKT also regulates the storage of glucose in the form of glycogen by phosphorylating GSK3A at 'Ser-21' and GSK3B at 'Ser-9', resulting in inhibition of its kinase activity. Phosphorylation of GSK3 isoforms by AKT is also thought to be one mechanism by which cell proliferation is driven. AKT also regulates cell survival via the phosphorylation of MAP3K5 (apoptosis signal-related kinase). Phosphorylation of 'Ser-83' decreases MAP3K5 kinase activity stimulated by oxidative stress and thereby prevents apoptosis. AKT mediates insulin-stimulated protein synthesis by phosphorylating TSC2 at 'Ser-939' and 'Thr-1462', thereby activating mTORC1 signaling and leading to both phosphorylation of 4E-BP1 and in activation of RPS6KB1. AKT is involved in the phosphorylation of members of the FOXO factors (Forkhead family of transcription factors), leading to binding of 14-3-3 proteins and cytoplasmic localization. In particular, FOXO1 is phosphorylated at 'Thr-24', 'Ser-256' and 'Ser-319'. FOXO3 and FOXO4 are phosphorylated on equivalent sites. AKT has an important role in the regulation of NF-kappa-B-dependent gene transcription and positively regulates the activity of CREB1 (cyclic AMP (cAMP)-response element binding protein). The phosphorylation of CREB1 induces the binding of accessory proteins that are necessary for the transcription of pro-survival genes such as BCL2 and MCL1. AKT phosphorylates 'Ser-454' on ATP citrate lyase (ACLY), thereby potentially regulating ACLY activity and fatty acid synthesis. Activates the 3B isoform of cyclic nucleotide phosphodiesterase (PDE3B) via phosphorylation of 'Ser-273', resulting in reduced cyclic AMP levels and inhibition of lipolysis. Phosphorylates PIKFYVE on 'Ser-318', which results in increased PI(3)P-5 activity. The Rho GTPase-activating protein DLC1 is another substrate and its phosphorylation is implicated in the regulation cell proliferation and cell growth. AKT plays a role as key modulator of the AKT-mTOR signaling pathway controlling the tempo of the process of newborn neurons integration during adult neurogenesis, including correct neuron positioning, dendritic development and synapse formation. Signals downstream of phosphatidylinositol 3-kinase (PI(3)K) to mediate the effects of various growth factors such as platelet-derived growth factor (PDGF), epidermal growth factor (EGF), insulin and insulin-like growth factor 1 (IGF1). AKT mediates the antiapoptotic effects of IGF1. Essential for the SPATA13-mediated regulation of cell migration and adhesion assembly and disassembly. May be involved in the regulation of the placental development. In response to lysophosphatidic acid stimulation, inhibits the ciliogenesis cascade. In this context, phosphorylates WDR44, hence stabilizing its interaction with Rab11 and preventing the formation of the ciliogenic Rab11-FIP3-RAB3IP complex. Also phosphorylates RAB3IP/Rabin8, thus may affect RAB3IP guanine nucleotide exchange factor (GEF) activity toward Rab8, which is important for cilia growth. Phosphorylates PKP1, facilitating its interaction with YWHAG and translocation to the nucleus, ultimately resulting in a reduction in keratinocyte intercellular adhesion. Phosphorylation of PKP1 increases PKP1 protein stability, translocation to the cytoplasm away from desmosome plaques and PKP1-driven cap-dependent translation. Functionally, several AKT2-specific substrates have been identified, including ANKRD2, C2CD5, CLK2 and PITX2. May play a role in myoblast differentiation. In this context, may act through PITX2 phosphorylation. Unphosphorylated PITX2 associates with an ELAVL1/HuR-containing complex, which stabilizes CCND1 cyclin mRNA, ensuring cell proliferation. Phosphorylation by AKT2 impairs this association, leading to CCND1 mRNA destabilization and progression towards differentiation. Also involved in the negative regulation of myogenesis in response to stress conditions. In this context, acts by phosphorylating ANKRD2. May also be a key regulator of glucose uptake. Regulates insulin-stimulated glucose transport by the increase of glucose transporter GLUT4 translocation from intracellular stores to the plasma membrane. In this context, acts by phosphorylating C2CD5/CDP138 on 'Ser-197' in insulin-stimulated adipocytes. Through the phosphorylation of CLK2 on 'Thr-343', involved in insulin-regulated suppression of hepatic gluconeogenesis. The sequence is that of RAC-beta serine/threonine-protein kinase from Homo sapiens (Human).